The primary structure comprises 506 residues: Pentatricopeptide repeat-containing protein At5g18475 (506 aa).

Residues 28-48 (SEKKKKPSPPPESSISPVETN) form a disordered region. PPR repeat units lie at residues 88–122 (NNAT…TCRF), 123–158 (QESL…RVKP), 159–194 (SLNA…GLQP), 195–229 (NTCI…GISY), 231–266 (NSIT…GISP), 267–301 (DPVT…GCNP), 302–336 (NVYN…GLKL), 337–371 (DTVG…RCRA), 372–406 (DTLT…GVHL), 407–441 (NKGS…GIWP), 442–476 (HHAT…GLIP), and 477–506 (GPKS…SLVS).

This sequence belongs to the PPR family. P subfamily.

This Arabidopsis thaliana (Mouse-ear cress) protein is Pentatricopeptide repeat-containing protein At5g18475.